A 750-amino-acid polypeptide reads, in one-letter code: Pesticidal crystal protein Cry11Bb (750 aa).

Residues 672-750 (QGYNDNYNQN…NYNQNTSSGV (79 aa)) are disordered.

This sequence belongs to the delta endotoxin family.

Its function is as follows. Promotes colloidosmotic lysis by binding to the midgut epithelial cells of mosquito larvae such as Aedes aegypti, Anopheles albimanus and Culex quinquefasciatus. The protein is Pesticidal crystal protein Cry11Bb (cry11Bb) of Bacillus thuringiensis subsp. medellin.